The chain runs to 433 residues: Histidinol dehydrogenase homolog (433 aa).

Zn(2+)-binding residues include Gln-249 and His-252. Catalysis depends on proton acceptor residues Glu-319 and His-320. Residues Asp-353 and His-412 each contribute to the Zn(2+) site.

It belongs to the histidinol dehydrogenase family. Zn(2+) serves as cofactor.

The chain is Histidinol dehydrogenase homolog from Ruegeria pomeroyi (strain ATCC 700808 / DSM 15171 / DSS-3) (Silicibacter pomeroyi).